The primary structure comprises 472 residues: GTPase Der (472 aa).

EngA-type G domains lie at 3 to 166 and 188 to 361; these read PIIA…IQNN and IKLA…HCST. GTP contacts are provided by residues 9–16, 56–60, 118–121, 194–201, 241–245, and 306–309; these read GRPNVGKS, DTGGI, NKID, GSSNVGKS, DTAGL, and NKWD. Residues 362–446 enclose the KH-like domain; it reads KRISTALLTK…PIRIQFNEPA (85 aa).

This sequence belongs to the TRAFAC class TrmE-Era-EngA-EngB-Septin-like GTPase superfamily. EngA (Der) GTPase family. As to quaternary structure, associates with the 50S ribosomal subunit.

In terms of biological role, GTPase that plays an essential role in the late steps of ribosome biogenesis. The protein is GTPase Der of Baumannia cicadellinicola subsp. Homalodisca coagulata.